Reading from the N-terminus, the 432-residue chain is 23S rRNA (uracil(1939)-C(5))-methyltransferase RlmD (432 aa).

In terms of domain architecture, TRAM spans 1–53 (MPIGKIESLDHEARGITRQEGKAIFVDGALPGETVEYASFRRKSKFELAHLVH). Residues C66, C72, C75, and C154 each contribute to the [4Fe-4S] cluster site. Residues Q263, F292, N297, E313, N341, and D362 each contribute to the S-adenosyl-L-methionine site. The active-site Nucleophile is C388.

Belongs to the class I-like SAM-binding methyltransferase superfamily. RNA M5U methyltransferase family. RlmD subfamily.

It carries out the reaction uridine(1939) in 23S rRNA + S-adenosyl-L-methionine = 5-methyluridine(1939) in 23S rRNA + S-adenosyl-L-homocysteine + H(+). Catalyzes the formation of 5-methyl-uridine at position 1939 (m5U1939) in 23S rRNA. This chain is 23S rRNA (uracil(1939)-C(5))-methyltransferase RlmD, found in Dechloromonas aromatica (strain RCB).